We begin with the raw amino-acid sequence, 328 residues long: GTPase Obg 2 (328 aa).

One can recognise an Obg domain in the interval 1-139; it reads MSFRREKFIE…HCVLLKLKIV (139 aa). Residues 140 to 309 enclose the OBG-type G domain; sequence SDVGIIGMPN…LHAQVKKAVV (170 aa). Residues 146-153, 171-175, 192-195, 259-262, and 290-292 contribute to the GTP site; these read GMPNAGKS, FTTLE, DIPG, NKCD, and GDE. 2 residues coordinate Mg(2+): Ser153 and Thr173.

The protein belongs to the TRAFAC class OBG-HflX-like GTPase superfamily. OBG GTPase family. Monomer. It depends on Mg(2+) as a cofactor.

It is found in the cytoplasm. Functionally, an essential GTPase which binds GTP, GDP and possibly (p)ppGpp with moderate affinity, with high nucleotide exchange rates and a fairly low GTP hydrolysis rate. Plays a role in control of the cell cycle, stress response, ribosome biogenesis and in those bacteria that undergo differentiation, in morphogenesis control. In Anaplasma marginale (strain St. Maries), this protein is GTPase Obg 2.